We begin with the raw amino-acid sequence, 422 residues long: Testin (422 aa).

The region spanning 92–199 (MILTSPVAAK…GDVKLPKEVE (108 aa)) is the PET domain. Residues 135-165 (QPVAGSEGAQYRKKQLAKQLPAHDQDPSKCH) form a disordered region. Basic and acidic residues predominate over residues 155-165 (PAHDQDPSKCH). 3 consecutive LIM zinc-binding domains span residues 234–299 (YYCF…SEKP), 300–359 (RCAG…NHAV), and 360–422 (SCQG…KMSS).

This sequence belongs to the prickle / espinas / testin family.

Its subcellular location is the cytoplasm. The protein localises to the cell cortex. The protein resides in the cell junction. It is found in the focal adhesion. Functionally, scaffold protein that may play a role in cell adhesion, cell spreading and in the reorganization of the actin cytoskeleton. May inhibit cell growth. Regulates cranial neural crest migration. Acts together with prickle1 to control axial elongation. This chain is Testin, found in Xenopus tropicalis (Western clawed frog).